The following is a 338-amino-acid chain: Lipoate-protein ligase A (338 aa).

In terms of domain architecture, BPL/LPL catalytic spans S29 to V216. Residues R71, G76 to F79, and K134 contribute to the ATP site. K134 serves as a coordination point for (R)-lipoate.

The protein belongs to the LplA family. As to quaternary structure, monomer.

Its subcellular location is the cytoplasm. It carries out the reaction L-lysyl-[lipoyl-carrier protein] + (R)-lipoate + ATP = N(6)-[(R)-lipoyl]-L-lysyl-[lipoyl-carrier protein] + AMP + diphosphate + H(+). The protein operates within protein modification; protein lipoylation via exogenous pathway; protein N(6)-(lipoyl)lysine from lipoate: step 1/2. It functions in the pathway protein modification; protein lipoylation via exogenous pathway; protein N(6)-(lipoyl)lysine from lipoate: step 2/2. Its function is as follows. Catalyzes both the ATP-dependent activation of exogenously supplied lipoate to lipoyl-AMP and the transfer of the activated lipoyl onto the lipoyl domains of lipoate-dependent enzymes. The polypeptide is Lipoate-protein ligase A (Yersinia pseudotuberculosis serotype IB (strain PB1/+)).